Consider the following 93-residue polypeptide: Small ribosomal subunit protein uS19 (93 aa).

The segment at 73–93 is disordered; the sequence is EFSPTRTYRGHNKKDKKIQKK. Over residues 80-93 the composition is skewed to basic residues; sequence YRGHNKKDKKIQKK.

Belongs to the universal ribosomal protein uS19 family.

Functionally, protein S19 forms a complex with S13 that binds strongly to the 16S ribosomal RNA. The polypeptide is Small ribosomal subunit protein uS19 (rpsS) (Aster yellows phytoplasma).